The chain runs to 115 residues: Insulin (115 aa).

The N-terminal stretch at 1–26 is a signal peptide; that stretch reads MALSPFLAAVIPLVLLLSRAPPSADT. 3 disulfides stabilise this stretch: C33–C101, C45–C114, and C100–C105. Residues 60–92 constitute a propeptide, c peptide; it reads DTGALAAFLPLAYAEDNESQDDESIGINEVLKS.

Belongs to the insulin family. Heterodimer of a B chain and an A chain linked by two disulfide bonds.

The protein resides in the secreted. In terms of biological role, insulin decreases blood glucose concentration. It increases cell permeability to monosaccharides, amino acids and fatty acids. It accelerates glycolysis, the pentose phosphate cycle, and glycogen synthesis in liver. In Myxine glutinosa (Atlantic hagfish), this protein is Insulin (ins).